Consider the following 513-residue polypeptide: MQLNPSEISELLKSRIEGLGASTDVRTQGTVVSVTDGITRIHGLSDVMQGEMLEFPNNVFGLALNLERDSVGAVILGDYTGVSEGDQVKTTGRILEVPVGPELRGRVVNTLGLPIDGKGPINTKETDIIEKVAPGVIARRSVSQPLQTGIKAIDSMVPIGRGQRELIIGDRQTGKTAVAVDTIISQKGKGVTCVYVAIGQKASTINNVVRKLEEHGAMEYTIVVAASASDSAAMQYLAAYAGCTMGEYFRDRGEDALIIYDDLTKQAWAYRQVSLLLRRPPGREAYPGDVFYLHSRLLERAARVNEEYVEKFTNGAVKGKTGSLTALPIIETQAGDVSAFVPTNVISITDGQIFLETDLFNAGVRPAINAGISVSRVGGAAQTKVVKKLSGGIRTDLAQYRELAAFAQFASDLDDATRRQLERGKRVVELLKQPQYQPLQVWELAVSLYTVNNGYLDDVDVAQVLSFEKSLKDQLKAKHAALIQRIEDTKELSKDDEAELAAAVQDFKKHGAF.

169-176 (GDRQTGKT) provides a ligand contact to ATP.

Belongs to the ATPase alpha/beta chains family. In terms of assembly, F-type ATPases have 2 components, CF(1) - the catalytic core - and CF(0) - the membrane proton channel. CF(1) has five subunits: alpha(3), beta(3), gamma(1), delta(1), epsilon(1). CF(0) has three main subunits: a(1), b(2) and c(9-12). The alpha and beta chains form an alternating ring which encloses part of the gamma chain. CF(1) is attached to CF(0) by a central stalk formed by the gamma and epsilon chains, while a peripheral stalk is formed by the delta and b chains.

It localises to the cell inner membrane. The catalysed reaction is ATP + H2O + 4 H(+)(in) = ADP + phosphate + 5 H(+)(out). Its function is as follows. Produces ATP from ADP in the presence of a proton gradient across the membrane. The alpha chain is a regulatory subunit. The chain is ATP synthase subunit alpha from Bordetella avium (strain 197N).